We begin with the raw amino-acid sequence, 139 residues long: MKKGTVLNSDISSVISRLGHTDTLVVCDAGLPIPKSATRIDMALTQGVPSFMQVLGVVTNEMQVEAVIIAEEIKQHNPQLHETLLTHLEQLQQHQGNTIEIRYTTHEQFKQQTAESQAVIRSGECSPYANIILCAGVTF.

His-20 serves as the catalytic Proton donor. Residues Asp-28, His-106, and 128-130 contribute to the substrate site; that span reads YAN.

It belongs to the RbsD / FucU family. RbsD subfamily. Homodecamer.

It is found in the cytoplasm. It catalyses the reaction beta-D-ribopyranose = beta-D-ribofuranose. It functions in the pathway carbohydrate metabolism; D-ribose degradation; D-ribose 5-phosphate from beta-D-ribopyranose: step 1/2. Its function is as follows. Catalyzes the interconversion of beta-pyran and beta-furan forms of D-ribose. The polypeptide is D-ribose pyranase (Escherichia coli O81 (strain ED1a)).